The chain runs to 1054 residues: Bifunctional cytochrome P450/NADPH--P450 reductase 2 (1054 aa).

The cytochrome P450 stretch occupies residues 1 to 475 (MKQASAIPQP…QADIKAETKP (475 aa)). Residue Cys-403 participates in heme binding. Basic and acidic residues predominate over residues 462-480 (QRKEQADIKAETKPKETKP). The disordered stretch occupies residues 462 to 482 (QRKEQADIKAETKPKETKPKH). The tract at residues 476-1053 (KETKPKHGTP…RRYVKDVWTG (578 aa)) is NADPH--P450 reductase. One can recognise a Flavodoxin-like domain in the interval 486-625 (LLVLFGSNLG…HRESWENRFW (140 aa)). FMN is bound by residues 492–497 (SNLGTA), 539–542 (SYNG), 573–575 (CGN), and 581–583 (TYQ). Residues 663-896 (YGAFEGIVLE…RTPQSGFQMP (234 aa)) enclose the FAD-binding FR-type domain.

In the N-terminal section; belongs to the cytochrome P450 family. FAD serves as cofactor. It depends on FMN as a cofactor. Heme b is required as a cofactor.

It localises to the cytoplasm. The enzyme catalyses an organic molecule + reduced [NADPH--hemoprotein reductase] + O2 = an alcohol + oxidized [NADPH--hemoprotein reductase] + H2O + H(+). It carries out the reaction 2 oxidized [cytochrome P450] + NADPH = 2 reduced [cytochrome P450] + NADP(+) + H(+). In terms of biological role, functions as a fatty acid monooxygenase. Catalyzes hydroxylation of a range of medium to long-chain fatty acids, with a preference for long-chain unsaturated and branched-chain fatty acids over saturated fatty acids. Hydroxylation of myristic acid occurs mainly at the omega-2 and omega-3 positions, in approximately equal proportions. Also displays a NADPH-dependent reductase activity in the C-terminal domain, which allows electron transfer from NADPH to the heme iron of the cytochrome P450 N-terminal domain. This is Bifunctional cytochrome P450/NADPH--P450 reductase 2 from Bacillus subtilis (strain 168).